We begin with the raw amino-acid sequence, 1143 residues long: Exportin-T (1143 aa).

Residues 566–593 form a disordered region; the sequence is ARNKLRAAQGSGRTTPSSSDNVDLGPSS. Residues 576 to 593 are compositionally biased toward polar residues; the sequence is SGRTTPSSSDNVDLGPSS.

Belongs to the exportin family.

It is found in the nucleus. Its subcellular location is the cytoplasm. TRNA nucleus export receptor which facilitates tRNA translocation across the nuclear pore complex. Involved in pre-tRNA splicing, probably by affecting the interaction of pre-tRNA with splicing endonuclease. In Cryptococcus neoformans var. neoformans serotype D (strain JEC21 / ATCC MYA-565) (Filobasidiella neoformans), this protein is Exportin-T (LOS1).